The following is a 545-amino-acid chain: 4-coumarate--CoA ligase 1 (545 aa).

Ser-192, Ser-193, Gly-194, Thr-195, Thr-196, and Lys-200 together coordinate ATP. Residues Tyr-242 and Ser-246 each coordinate (E)-4-coumaroyl-AMP. CoA is bound at residue Lys-263. The interval 265-334 (DIAQFLELIP…AKFPNAKLGQ (70 aa)) is SBD1. Residues Ala-312, Gln-334, Gly-335, Thr-339, and Met-347 each contribute to the (E)-4-coumaroyl-AMP site. Residues Gln-334, Gly-335, and Thr-339 each coordinate ATP. Residues 335–402 (GYGMTEAGPV…IRGDQIMKGY (68 aa)) form an SBD2 region. Asp-423 and Arg-438 together coordinate ATP. (E)-4-coumaroyl-AMP-binding residues include Lys-440 and Lys-444. Residues Lys-446 and Gly-447 each coordinate CoA. Residue Lys-529 coordinates ATP.

The protein belongs to the ATP-dependent AMP-binding enzyme family. It depends on Mg(2+) as a cofactor.

It catalyses the reaction (E)-4-coumarate + ATP + CoA = (E)-4-coumaroyl-CoA + AMP + diphosphate. The enzyme catalyses (E)-4-coumarate + ATP + H(+) = (E)-4-coumaroyl-AMP + diphosphate. The catalysed reaction is (E)-4-coumaroyl-AMP + CoA = (E)-4-coumaroyl-CoA + AMP + H(+). Its pathway is phytoalexin biosynthesis; 3,4',5-trihydroxystilbene biosynthesis; 3,4',5-trihydroxystilbene from trans-4-coumarate: step 1/2. In terms of biological role, carboxylate--CoA ligase that may use 4-coumarate as substrate. Follows a two-step reaction mechanism, wherein the carboxylate substrate first undergoes adenylation by ATP, followed by a thioesterification in the presence of CoA to yield the final CoA thioester. The protein is 4-coumarate--CoA ligase 1 (4CL1) of Solanum tuberosum (Potato).